The chain runs to 184 residues: U3 small nucleolar ribonucleoprotein protein IMP3 (184 aa).

In terms of domain architecture, S4 RNA-binding spans 109–175 (RRLPTVLLKL…IKRHVLEYNE (67 aa)).

This sequence belongs to the universal ribosomal protein uS4 family. In terms of assembly, part of the small subunit (SSU) processome, composed of more than 70 proteins and the RNA chaperone small nucleolar RNA (snoRNA) U3. Component of a heterotrimeric complex containing IMP3, IMP4 and MPHOSPH10. Interacts with MPHOSPH10.

The protein resides in the nucleus. It localises to the nucleolus. In terms of biological role, component of the 60-80S U3 small nucleolar ribonucleoprotein (U3 snoRNP). Required for the early cleavages during pre-18S ribosomal RNA processing. Part of the small subunit (SSU) processome, first precursor of the small eukaryotic ribosomal subunit. During the assembly of the SSU processome in the nucleolus, many ribosome biogenesis factors, an RNA chaperone and ribosomal proteins associate with the nascent pre-rRNA and work in concert to generate RNA folding, modifications, rearrangements and cleavage as well as targeted degradation of pre-ribosomal RNA by the RNA exosome. This is U3 small nucleolar ribonucleoprotein protein IMP3 from Homo sapiens (Human).